Reading from the N-terminus, the 161-residue chain is Photosystem II extrinsic protein V (161 aa).

The N-terminal stretch at Met-1–Ala-25 is a signal peptide. Cys-61, Cys-64, His-65, and His-116 together coordinate heme c.

This sequence belongs to the cytochrome c family. PsbV subfamily. As to quaternary structure, PSII is composed of 1 copy each of membrane proteins PsbA, PsbB, PsbC, PsbD, PsbE, PsbF, PsbH, PsbI, PsbJ, PsbK, PsbL, PsbM, PsbT, PsbX, PsbY, PsbZ, Psb30/Ycf12, peripheral proteins PsbO, CyanoQ (PsbQ), PsbU, PsbV and a large number of cofactors. It forms dimeric complexes. Requires heme c as cofactor.

The protein localises to the cellular thylakoid membrane. In terms of biological role, one of the extrinsic, lumenal subunits of photosystem II (PSII). PSII is a light-driven water plastoquinone oxidoreductase, using light energy to abstract electrons from H(2)O, generating a proton gradient subsequently used for ATP formation. The extrinsic proteins stabilize the structure of photosystem II oxygen-evolving complex (OEC), the ion environment of oxygen evolution and protect the OEC against heat-induced inactivation. Low-potential cytochrome c that plays a role in the OEC of PSII. The sequence is that of Photosystem II extrinsic protein V from Trichodesmium erythraeum (strain IMS101).